The following is a 67-amino-acid chain: ATP synthase F(0) complex subunit 8 (67 aa).

The chain crosses the membrane as a helical span at residues 8 to 24 (TWFTTVLASSITLFILM). An N6-acetyllysine; alternate modification is found at Lys54. Lys54 is modified (N6-succinyllysine; alternate). At Lys57 the chain carries N6-acetyllysine.

This sequence belongs to the ATPase protein 8 family. As to quaternary structure, component of the ATP synthase complex composed at least of ATP5F1A/subunit alpha, ATP5F1B/subunit beta, ATP5MC1/subunit c (homooctomer), MT-ATP6/subunit a, MT-ATP8/subunit 8, ATP5ME/subunit e, ATP5MF/subunit f, ATP5MG/subunit g, ATP5MK/subunit k, ATP5MJ/subunit j, ATP5F1C/subunit gamma, ATP5F1D/subunit delta, ATP5F1E/subunit epsilon, ATP5PF/subunit F6, ATP5PB/subunit b, ATP5PD/subunit d, ATP5PO/subunit OSCP. ATP synthase complex consists of a soluble F(1) head domain (subunits alpha(3) and beta(3)) - the catalytic core - and a membrane F(0) domain - the membrane proton channel (subunits c, a, 8, e, f, g, k and j). These two domains are linked by a central stalk (subunits gamma, delta, and epsilon) rotating inside the F1 region and a stationary peripheral stalk (subunits F6, b, d, and OSCP). Interacts with PRICKLE3.

The protein localises to the mitochondrion membrane. Functionally, subunit 8, of the mitochondrial membrane ATP synthase complex (F(1)F(0) ATP synthase or Complex V) that produces ATP from ADP in the presence of a proton gradient across the membrane which is generated by electron transport complexes of the respiratory chain. ATP synthase complex consist of a soluble F(1) head domain - the catalytic core - and a membrane F(1) domain - the membrane proton channel. These two domains are linked by a central stalk rotating inside the F(1) region and a stationary peripheral stalk. During catalysis, ATP synthesis in the catalytic domain of F(1) is coupled via a rotary mechanism of the central stalk subunits to proton translocation. In vivo, can only synthesize ATP although its ATP hydrolase activity can be activated artificially in vitro. Part of the complex F(0) domain. This is ATP synthase F(0) complex subunit 8 from Cricetulus griseus (Chinese hamster).